A 307-amino-acid chain; its full sequence is MIRQRTLKQLVHATGVGLHSGRKVSLTFRPAPVNTGIVYVRTDLQPEVELRADAQFVRDTVLCTALVNEQGVRISTVEHLSAALASLGIDNLYVEVDAPEVPVMDGSAHPFIYLLQSGGIEEQSLPKQFIRIKKKIRVEDGDKWAEFAPYRRGFRMDLQIDFRHPVFDKQNQHLVFDFSGSKFAKEISRARTFGFMKDIEYLHSQNLALGGSLDNAVVLDDYRVLNEEGLRYEDEFVKHKLLDAIGDLYMCNHSILGQFTAYKTGHAINNKLLRALLADAEAWEMVTFEEEAAKSPIAYFGTKLVLA.

The Zn(2+) site is built by histidine 79, histidine 239, and aspartate 243. The active-site Proton donor is histidine 266.

It belongs to the LpxC family. Zn(2+) serves as cofactor.

It carries out the reaction a UDP-3-O-[(3R)-3-hydroxyacyl]-N-acetyl-alpha-D-glucosamine + H2O = a UDP-3-O-[(3R)-3-hydroxyacyl]-alpha-D-glucosamine + acetate. It functions in the pathway glycolipid biosynthesis; lipid IV(A) biosynthesis; lipid IV(A) from (3R)-3-hydroxytetradecanoyl-[acyl-carrier-protein] and UDP-N-acetyl-alpha-D-glucosamine: step 2/6. Functionally, catalyzes the hydrolysis of UDP-3-O-myristoyl-N-acetylglucosamine to form UDP-3-O-myristoylglucosamine and acetate, the committed step in lipid A biosynthesis. In Tolumonas auensis (strain DSM 9187 / NBRC 110442 / TA 4), this protein is UDP-3-O-acyl-N-acetylglucosamine deacetylase.